A 380-amino-acid polypeptide reads, in one-letter code: Pectin lyase (380 aa).

An N-terminal signal peptide occupies residues 1 to 20; that stretch reads MRSASILSAALAAFAPLASA. An N-linked (GlcNAc...) asparagine glycan is attached at Asn130.

This sequence belongs to the polysaccharide lyase 1 family.

The protein localises to the secreted. It carries out the reaction Eliminative cleavage of (1-&gt;4)-alpha-D-galacturonan methyl ester to give oligosaccharides with 4-deoxy-6-O-methyl-alpha-D-galact-4-enuronosyl groups at their non-reducing ends.. The sequence is that of Pectin lyase (PNLA) from Colletotrichum gloeosporioides (Anthracnose fungus).